A 20-amino-acid chain; its full sequence is Short cationic peptide-4a (20 aa).

Glutamate 20 carries the glutamic acid 1-amide modification.

In terms of tissue distribution, expressed by the venom gland.

The protein localises to the secreted. This Cupiennius salei (American wandering spider) protein is Short cationic peptide-4a.